A 239-amino-acid chain; its full sequence is Sugar fermentation stimulation protein homolog (239 aa).

The protein belongs to the SfsA family.

This chain is Sugar fermentation stimulation protein homolog, found in Cyanothece sp. (strain PCC 7425 / ATCC 29141).